Reading from the N-terminus, the 910-residue chain is Putative disease resistance protein At1g58400 (910 aa).

Positions 15–57 form a coiled coil; that stretch reads DRLTQEYEQFQGVEDRIAELKSNLNLLKSFLKDAEAKKNTSQM. An NB-ARC domain is found at 148 to 460; sequence REREMRQTFS…AEGILEPRHY (313 aa). 191-198 contacts ATP; sequence GMGGLGKT. LRR repeat units lie at residues 580–604 and 605–628; these read LELL…GIGK and LIHL…LGNL.

This sequence belongs to the disease resistance NB-LRR family.

Potential disease resistance protein. The chain is Putative disease resistance protein At1g58400 from Arabidopsis thaliana (Mouse-ear cress).